The following is a 419-amino-acid chain: Serine--tRNA ligase (419 aa).

The interval Ala-45–Glu-66 is disordered. Thr-226–Glu-228 is a binding site for L-serine. Residues Arg-257–Glu-259 and Val-273 contribute to the ATP site. Glu-280 contributes to the L-serine binding site. Glu-344–Ser-347 is a binding site for ATP. Residue Thr-379 participates in L-serine binding.

The protein belongs to the class-II aminoacyl-tRNA synthetase family. Type-1 seryl-tRNA synthetase subfamily. As to quaternary structure, homodimer. The tRNA molecule binds across the dimer.

The protein resides in the cytoplasm. The enzyme catalyses tRNA(Ser) + L-serine + ATP = L-seryl-tRNA(Ser) + AMP + diphosphate + H(+). It catalyses the reaction tRNA(Sec) + L-serine + ATP = L-seryl-tRNA(Sec) + AMP + diphosphate + H(+). Its pathway is aminoacyl-tRNA biosynthesis; selenocysteinyl-tRNA(Sec) biosynthesis; L-seryl-tRNA(Sec) from L-serine and tRNA(Sec): step 1/1. Catalyzes the attachment of serine to tRNA(Ser). Is also able to aminoacylate tRNA(Sec) with serine, to form the misacylated tRNA L-seryl-tRNA(Sec), which will be further converted into selenocysteinyl-tRNA(Sec). This is Serine--tRNA ligase from Mycobacterium ulcerans (strain Agy99).